The primary structure comprises 124 residues: uncharacterized protein (124 aa).

Positions 1–21 (MFLLSLLHFFHPSLIPSLSLS) are cleaved as a signal peptide.

This is an uncharacterized protein from Schizosaccharomyces pombe (strain 972 / ATCC 24843) (Fission yeast).